Here is a 741-residue protein sequence, read N- to C-terminus: T-box transcription factor TBX3 (741 aa).

Positions 107–220 (LEAKELWDQF…NNISDKHGFT (114 aa)) form a DNA-binding region, T-box; first part. Positions 241 to 305 (ILNSMHKYQP…NNPFAKGFRD (65 aa)) form a DNA-binding region, T-box; second part. Position 369 is a phosphoserine (S369). The tract at residues 369–469 (SEAESDAEAE…EGPVATKVDE (101 aa)) is disordered. Basic and acidic residues-rich tracts occupy residues 377–386 (AESKEEHGPE) and 420–437 (SRAR…DSRH). S432, S438, S456, S705, S736, S738, and S740 each carry phosphoserine. Residues 438-447 (SPATISSSTR) show a composition bias toward polar residues.

As to quaternary structure, interacts with PML. As to expression, in adults, highest levels in lung. Also found in brain, heart, kidney, liver and ovary.

It localises to the nucleus. Its function is as follows. Transcriptional repressor involved in developmental processes. Binds to the palindromic T site 5'-TTCACACCTAGGTGTGAA-3' DNA sequence, or a half-site, which are present in the regulatory region of several genes. Probably plays a role in limb pattern formation. Required for mammary placode induction, and maintenance of the mammary buds during development. Involved in branching morphogenesis in both developing lungs and adult mammary glands, via negative modulation of target genes; acting redundantly with TBX2. Required, together with TBX2, to maintain cell proliferation in the embryonic lung mesenchyme; perhaps acting downstream of SHH, BMP and TGFbeta signaling. Involved in modulating early inner ear development, acting independently of, and also redundantly with, TBX2 in different subregions of the developing ear. Acts as a negative regulator of PML function in cellular senescence. The protein is T-box transcription factor TBX3 (Tbx3) of Mus musculus (Mouse).